The primary structure comprises 362 residues: Cobalt-precorrin-5B C(1)-methyltransferase (362 aa).

It belongs to the CbiD family.

The catalysed reaction is Co-precorrin-5B + S-adenosyl-L-methionine = Co-precorrin-6A + S-adenosyl-L-homocysteine. The protein operates within cofactor biosynthesis; adenosylcobalamin biosynthesis; cob(II)yrinate a,c-diamide from sirohydrochlorin (anaerobic route): step 6/10. In terms of biological role, catalyzes the methylation of C-1 in cobalt-precorrin-5B to form cobalt-precorrin-6A. This Burkholderia vietnamiensis (strain G4 / LMG 22486) (Burkholderia cepacia (strain R1808)) protein is Cobalt-precorrin-5B C(1)-methyltransferase.